The primary structure comprises 765 residues: FHF complex subunit HOOK interacting protein 2A (765 aa).

Composition is skewed to polar residues over residues 200–209 (LSTDTGQSCQ) and 538–550 (NTLS…SSSP). 2 disordered regions span residues 200 to 234 (LSTD…QMGD) and 538 to 562 (NTLS…TDGK).

The protein belongs to the FHIP family.

Functionally, may be required for proper functioning of the nervous system. In Bos taurus (Bovine), this protein is FHF complex subunit HOOK interacting protein 2A (FHIP2A).